The sequence spans 587 residues: 5-aminolevulinate synthase, erythroid-specific, mitochondrial (587 aa).

A mitochondrion-targeting transit peptide spans 1-49; it reads MVTAAMLLQCCPVLARGPTSLLGKVVKTHQFLFGIGRCPILATQGPNCS. Arg163 lines the succinyl-CoA pocket. Pyridoxal 5'-phosphate is bound by residues Cys258 and Phe259. 2 residues coordinate succinyl-CoA: Ser280 and Lys299. Pyridoxal 5'-phosphate is bound by residues Ser332, His360, and Thr388. The active site involves Lys391. The residue at position 391 (Lys391) is an N6-(pyridoxal phosphate)lysine. Pyridoxal 5'-phosphate is bound by residues Thr420 and Thr421. Residue Thr508 coordinates succinyl-CoA.

It belongs to the class-II pyridoxal-phosphate-dependent aminotransferase family. Homodimer. Interacts with SUCLA2. In terms of assembly, interacts with SUCLA2. The cofactor is pyridoxal 5'-phosphate. As to expression, erythroid-specific.

It localises to the mitochondrion inner membrane. It carries out the reaction succinyl-CoA + glycine + H(+) = 5-aminolevulinate + CO2 + CoA. Its pathway is porphyrin-containing compound metabolism; protoporphyrin-IX biosynthesis; 5-aminolevulinate from glycine: step 1/1. Down-regulated by itaconyl-CoA which acts as a competitive inhibitor of succinyl-CoA substrate. Catalyzes the pyridoxal 5'-phosphate (PLP)-dependent condensation of succinyl-CoA and glycine to form aminolevulinic acid (ALA), with CoA and CO2 as by-products. Contributes significantly to heme formation during erythropoiesis. Functionally, catalyzes the pyridoxal 5'-phosphate (PLP)-dependent condensation of succinyl-CoA and glycine to form aminolevulinic acid (ALA), with CoA and CO2 as by-products. Catalytic activity is 75-85% of isoform 1 activity. In terms of biological role, catalyzes the pyridoxal 5'-phosphate (PLP)-dependent condensation of succinyl-CoA and glycine to form aminolevulinic acid (ALA), with CoA and CO2 as by-products. Catalytic activity is 65-75% of isoform 1 activity. This is 5-aminolevulinate synthase, erythroid-specific, mitochondrial from Homo sapiens (Human).